We begin with the raw amino-acid sequence, 341 residues long: Glyceraldehyde-3-phosphate dehydrogenase 3 (341 aa).

NAD(+) is bound by residues 13–14, D35, and R85; that span reads RI. Residues 157–159, T188, 217–218, and R240 contribute to the D-glyceraldehyde 3-phosphate site; these read SCT and TG. The Nucleophile role is filled by C158. An NAD(+)-binding site is contributed by N322.

The protein belongs to the glyceraldehyde-3-phosphate dehydrogenase family. In terms of assembly, homotetramer.

It is found in the cytoplasm. The enzyme catalyses D-glyceraldehyde 3-phosphate + phosphate + NAD(+) = (2R)-3-phospho-glyceroyl phosphate + NADH + H(+). The protein operates within carbohydrate degradation; glycolysis; pyruvate from D-glyceraldehyde 3-phosphate: step 1/5. In Caenorhabditis elegans, this protein is Glyceraldehyde-3-phosphate dehydrogenase 3 (gpd-3).